Here is a 332-residue protein sequence, read N- to C-terminus: Endo-1,4-beta-xylanase (332 aa).

The signal sequence occupies residues 1 to 21 (MLSSTTLLAILSALALTSVQA). The GH10 domain occupies 26-316 (KNSLDYLANK…KSTYYVVQQA (291 aa)). Glu120 acts as the Proton donor in catalysis. The cysteines at positions 128 and 160 are disulfide-linked. Catalysis depends on Glu214, which acts as the Nucleophile. A disulfide bond links Cys247 and Cys253.

Belongs to the glycosyl hydrolase 10 (cellulase F) family.

Its subcellular location is the secreted. The enzyme catalyses Endohydrolysis of (1-&gt;4)-beta-D-xylosidic linkages in xylans.. Requires at least three xylose residues for catalytic activity. Does not have activity against xylobiose. The polypeptide is Endo-1,4-beta-xylanase (Naganishia albida (Cryptococcus albidus)).